The primary structure comprises 662 residues: uncharacterized protein (662 aa).

Disordered stretches follow at residues 1–94, 107–237, 288–328, 406–440, and 506–580; these read MSQR…NENN, DHNN…VKYH, ETTS…TPSA, QSSFLNKPTNNTETPTTTTTTTTTTTTTPSQPIQM, and QNSI…MVSP. Positions 25-49 are enriched in low complexity; sequence TTTTTPTPTTTTTTTSSLSSSTSST. The segment covering 77-87 has biased composition (basic and acidic residues); it reads DNIKLDNEKTF. Over residues 109–161 the composition is skewed to low complexity; the sequence is NNNNNNNNNNNNNNNNNNNNNNNNNNNNNNNNNNNNNNNNNNNNNNNNNNNNN. Positions 162–176 are enriched in polar residues; it reads DTQKGTNKNENNCTD. A compositionally biased stretch (low complexity) spans 183–196; the sequence is STSTTSSSETGSST. Residues 203-212 show a composition bias toward polar residues; the sequence is KTPQSCLKKS. The segment covering 213–224 has biased composition (low complexity); sequence NNNNNDNNNNNN. Residues 226-235 are compositionally biased toward basic residues; sequence KTPRSTKKVK. Low complexity-rich tracts occupy residues 288 to 308, 413 to 434, 515 to 526, and 535 to 575; these read ETTSVTSTTSTATTTTTTPIP, PTNNTETPTTTTTTTTTTTTTP, PTKSSSSTSIQQ, and NINN…NNNN.

This is an uncharacterized protein from Dictyostelium discoideum (Social amoeba).